We begin with the raw amino-acid sequence, 333 residues long: Foldase protein PrsA (333 aa).

A signal peptide spans 1 to 19; that stretch reads MKKRHLLIAGLACMTILGA. Cysteine 20 carries N-palmitoyl cysteine lipidation. Cysteine 20 is lipidated: S-diacylglycerol cysteine. The 91-residue stretch at 155 to 245 folds into the PpiC domain; sequence LIEVEASHIL…YGYHIILVTD (91 aa). Residues 291–333 form a disordered region; the sequence is GLFDLPDAPPVEDTPEIDGEDASDEAEDQAEDADENAEEEDES. Acidic residues predominate over residues 303–333; the sequence is DTPEIDGEDASDEAEDQAEDADENAEEEDES.

It belongs to the PrsA family.

It localises to the cell membrane. The enzyme catalyses [protein]-peptidylproline (omega=180) = [protein]-peptidylproline (omega=0). In terms of biological role, plays a major role in protein secretion by helping the post-translocational extracellular folding of several secreted proteins. In Halalkalibacterium halodurans (strain ATCC BAA-125 / DSM 18197 / FERM 7344 / JCM 9153 / C-125) (Bacillus halodurans), this protein is Foldase protein PrsA.